A 494-amino-acid polypeptide reads, in one-letter code: UPF0371 protein spyM18_1356 (494 aa).

Belongs to the UPF0371 family.

The sequence is that of UPF0371 protein spyM18_1356 from Streptococcus pyogenes serotype M18 (strain MGAS8232).